A 513-amino-acid chain; its full sequence is Glucose-1-phosphate adenylyltransferase small subunit, chloroplastic/amyloplastic (513 aa).

The N-terminal 64 residues, 1-64, are a transit peptide targeting the chloroplast; that stretch reads MAMAAAASPS…RRPFFFSPRA (64 aa).

It belongs to the bacterial/plant glucose-1-phosphate adenylyltransferase family. As to quaternary structure, heterotetramer. In terms of tissue distribution, leaves and starchy endosperm.

The protein resides in the plastid. The protein localises to the chloroplast. Its subcellular location is the amyloplast. The enzyme catalyses alpha-D-glucose 1-phosphate + ATP + H(+) = ADP-alpha-D-glucose + diphosphate. Its pathway is glycan biosynthesis; starch biosynthesis. Activated by 3'phosphoglycerate, inhibited by orthophosphate. Allosteric regulation. In terms of biological role, this protein plays a role in synthesis of starch. It catalyzes the synthesis of the activated glycosyl donor, ADP-glucose from Glc-1-P and ATP. The sequence is that of Glucose-1-phosphate adenylyltransferase small subunit, chloroplastic/amyloplastic from Hordeum vulgare (Barley).